A 393-amino-acid chain; its full sequence is NAD(P)H-quinone oxidoreductase subunit H, chloroplastic (393 aa).

This sequence belongs to the complex I 49 kDa subunit family. In terms of assembly, NDH is composed of at least 16 different subunits, 5 of which are encoded in the nucleus.

It is found in the plastid. The protein localises to the chloroplast thylakoid membrane. It catalyses the reaction a plastoquinone + NADH + (n+1) H(+)(in) = a plastoquinol + NAD(+) + n H(+)(out). The enzyme catalyses a plastoquinone + NADPH + (n+1) H(+)(in) = a plastoquinol + NADP(+) + n H(+)(out). Functionally, NDH shuttles electrons from NAD(P)H:plastoquinone, via FMN and iron-sulfur (Fe-S) centers, to quinones in the photosynthetic chain and possibly in a chloroplast respiratory chain. The immediate electron acceptor for the enzyme in this species is believed to be plastoquinone. Couples the redox reaction to proton translocation, and thus conserves the redox energy in a proton gradient. The protein is NAD(P)H-quinone oxidoreductase subunit H, chloroplastic of Calycanthus floridus var. glaucus (Eastern sweetshrub).